The following is a 464-amino-acid chain: MLTKPIQEEEKIYKNSSLGSYWITTFGCQMNKADSERMAGTLEKMGYSRAIDELKADLVLYNTCTIRDSAQQKVYSFLGKQVKRKHSTPKLKLVVAGCLAQQEGESLLRRVPELDLIMGPQHVNNLENLLERVDLGNQVVATEETFISEDITNPRRDSSICGWVNIIYGCNERCSYCVVPSVRGKEQSRYPDAIKSEIESLAHNNFKEVTLLGQNIDAYGRDLPGTTKEGRKENSLTDLLYFIHDVEGIKRIRFSTSHPKYFSKRLINACYELDKVCEHFHIPFQSGNNEILRLMARGYTIEKYKRIIENIRQLMPNASITADAIVAFPGETETQYRETLKLISDIGFDQVMTAAYSPRPNTPAAFWDNQIPEEVKKERLKEINELVETTSRKRNQRYLNNIESVLIEGLNPKNNAQMMGRTRTNRLTFVEISKNIEFNYSYGDEINVKITEARSFSLSGQIYK.

Residues 19-135 (GSYWITTFGC…LENLLERVDL (117 aa)) enclose the MTTase N-terminal domain. Residues cysteine 28, cysteine 64, cysteine 98, cysteine 170, cysteine 174, and cysteine 177 each coordinate [4Fe-4S] cluster. In terms of domain architecture, Radical SAM core spans 156-393 (RDSSICGWVN…NELVETTSRK (238 aa)). In terms of domain architecture, TRAM spans 396–464 (QRYLNNIESV…SFSLSGQIYK (69 aa)).

Belongs to the methylthiotransferase family. MiaB subfamily. In terms of assembly, monomer. It depends on [4Fe-4S] cluster as a cofactor.

It localises to the cytoplasm. The catalysed reaction is N(6)-dimethylallyladenosine(37) in tRNA + (sulfur carrier)-SH + AH2 + 2 S-adenosyl-L-methionine = 2-methylsulfanyl-N(6)-dimethylallyladenosine(37) in tRNA + (sulfur carrier)-H + 5'-deoxyadenosine + L-methionine + A + S-adenosyl-L-homocysteine + 2 H(+). Functionally, catalyzes the methylthiolation of N6-(dimethylallyl)adenosine (i(6)A), leading to the formation of 2-methylthio-N6-(dimethylallyl)adenosine (ms(2)i(6)A) at position 37 in tRNAs that read codons beginning with uridine. The chain is tRNA-2-methylthio-N(6)-dimethylallyladenosine synthase from Prochlorococcus marinus subsp. pastoris (strain CCMP1986 / NIES-2087 / MED4).